A 113-amino-acid polypeptide reads, in one-letter code: Ribosome-associated factor Y (113 aa).

K66 carries the N6-acetyllysine modification. Positions 91 to 113 are disordered; sequence KGEARRAATSVKDANFVEEVEEE.

The protein belongs to the HPF/YfiA ribosome-associated protein family. YfiA subfamily. In terms of assembly, associates mainly with 70S ribosomes.

Functionally, during stationary phase, prevents 70S dimer formation, probably in order to regulate translation efficiency during transition between the exponential and the stationary phases. In addition, during environmental stress such as cold shock or excessive cell density at stationary phase, stabilizes the 70S ribosome against dissociation, inhibits translation initiation and increase translation accuracy. When normal growth conditions are restored, is quickly released from the ribosome. This chain is Ribosome-associated factor Y, found in Escherichia coli O157:H7.